Here is a 320-residue protein sequence, read N- to C-terminus: ATP-dependent 6-phosphofructokinase (320 aa).

Residue glycine 12 participates in ATP binding. 22–26 (RGVVR) contributes to the ADP binding site. ATP contacts are provided by residues 73–74 (RF) and 103–106 (GDGS). Aspartate 104 is a Mg(2+) binding site. A substrate-binding site is contributed by 126-128 (TID). The active-site Proton acceptor is aspartate 128. Residue arginine 155 coordinates ADP. Substrate contacts are provided by residues arginine 163 and 170–172 (MGR). Residues 186–188 (GCE), lysine 212, and 214–216 (KKH) each bind ADP. Residues glutamate 223, arginine 244, and 250–253 (HIQR) each bind substrate.

This sequence belongs to the phosphofructokinase type A (PFKA) family. ATP-dependent PFK group I subfamily. Prokaryotic clade 'B1' sub-subfamily. Homotetramer. Mg(2+) serves as cofactor.

Its subcellular location is the cytoplasm. It catalyses the reaction beta-D-fructose 6-phosphate + ATP = beta-D-fructose 1,6-bisphosphate + ADP + H(+). Its pathway is carbohydrate degradation; glycolysis; D-glyceraldehyde 3-phosphate and glycerone phosphate from D-glucose: step 3/4. With respect to regulation, allosterically activated by ADP and other diphosphonucleosides, and allosterically inhibited by phosphoenolpyruvate. In terms of biological role, catalyzes the phosphorylation of D-fructose 6-phosphate to fructose 1,6-bisphosphate by ATP, the first committing step of glycolysis. In Vibrio parahaemolyticus serotype O3:K6 (strain RIMD 2210633), this protein is ATP-dependent 6-phosphofructokinase.